Here is a 126-residue protein sequence, read N- to C-terminus: MADMKWAVAHIKSSFNNTIITVTDITGAETIAKSSGGMVVKAARDESSPYTAMQMAGQLADQLRDKGINGIHIRVRAPGGNKQRSPGPGAQAAIRAFARAGIRIGRIEDVTPVPHDGTRPKGGRRV.

It belongs to the universal ribosomal protein uS11 family. As to quaternary structure, part of the 30S ribosomal subunit.

Functionally, located on the platform of the 30S subunit. The sequence is that of Small ribosomal subunit protein uS11 from Methanosarcina mazei (strain ATCC BAA-159 / DSM 3647 / Goe1 / Go1 / JCM 11833 / OCM 88) (Methanosarcina frisia).